The primary structure comprises 243 residues: Carboxy-S-adenosyl-L-methionine synthase (243 aa).

Residues Tyr-40, 65 to 67, 90 to 91, 118 to 119, Asn-133, and Arg-200 contribute to the S-adenosyl-L-methionine site; these read GCS, DN, and DI.

The protein belongs to the class I-like SAM-binding methyltransferase superfamily. Cx-SAM synthase family. Homodimer.

The catalysed reaction is prephenate + S-adenosyl-L-methionine = carboxy-S-adenosyl-L-methionine + 3-phenylpyruvate + H2O. Functionally, catalyzes the conversion of S-adenosyl-L-methionine (SAM) to carboxy-S-adenosyl-L-methionine (Cx-SAM). This is Carboxy-S-adenosyl-L-methionine synthase from Shewanella sediminis (strain HAW-EB3).